The following is a 107-amino-acid chain: L-rhamnose mutarotase (107 aa).

Y21 serves as a coordination point for substrate. H25 serves as the catalytic Proton donor. Substrate contacts are provided by residues Y44 and 79–80; that span reads WW.

Belongs to the rhamnose mutarotase family. In terms of assembly, homodimer.

Its subcellular location is the cytoplasm. It catalyses the reaction alpha-L-rhamnose = beta-L-rhamnose. The protein operates within carbohydrate metabolism; L-rhamnose metabolism. Its function is as follows. Involved in the anomeric conversion of L-rhamnose. The protein is L-rhamnose mutarotase of Agrobacterium fabrum (strain C58 / ATCC 33970) (Agrobacterium tumefaciens (strain C58)).